The chain runs to 270 residues: Phosphatidylinositol transfer protein alpha isoform (270 aa).

A 1,2-diacyl-sn-glycero-3-phospho-(1D-myo-inositol) is bound by residues T58, K60, E85, N89, T96, and K194. Residue K215 is modified to N6-acetyllysine.

It belongs to the PtdIns transfer protein family. PI transfer class I subfamily. Phosphorylated by PKC in a calcium and phosphatidylserine-dependent manner.

The protein resides in the cytoplasm. It localises to the nucleus. The catalysed reaction is a 1,2-diacyl-sn-glycero-3-phosphocholine(in) = a 1,2-diacyl-sn-glycero-3-phosphocholine(out). It catalyses the reaction a 1,2-diacyl-sn-glycero-3-phospho-(1D-myo-inositol)(in) = a 1,2-diacyl-sn-glycero-3-phospho-(1D-myo-inositol)(out). In terms of biological role, catalyzes the transfer of phosphatidylinositol (PI) and phosphatidylcholine (PC) between membranes. Shows a preference for PI and PC containing shorter saturated or monosaturated acyl chains at the sn-1 and sn-2 positions. Preference order for PC is C16:1 &gt; C16:0 &gt; C18:1 &gt; C18:0 &gt; C20:4 and for PI is C16:1 &gt; C16:0 &gt; C18:1 &gt; C18:0 &gt; C20:4 &gt; C20:3. The polypeptide is Phosphatidylinositol transfer protein alpha isoform (PITPNA) (Bos taurus (Bovine)).